The chain runs to 155 residues: Small ribosomal subunit protein uS7c (155 aa).

The protein belongs to the universal ribosomal protein uS7 family. As to quaternary structure, part of the 30S ribosomal subunit.

It localises to the plastid. The protein localises to the chloroplast. Functionally, one of the primary rRNA binding proteins, it binds directly to 16S rRNA where it nucleates assembly of the head domain of the 30S subunit. The protein is Small ribosomal subunit protein uS7c (rps7) of Spirogyra maxima (Green alga).